A 258-amino-acid chain; its full sequence is Uridylate cyclase (258 aa).

Residues 50–190 (AAIFIDLRGS…DVVNKASKMC (141 aa)) form the Guanylate cyclase domain. Position 53 (Phe53) interacts with a ribonucleoside 5'-triphosphate. Residues Asp55 and Asp102 each coordinate Mn(2+).

It belongs to the adenylyl cyclase class-4/guanylyl cyclase family. Pyrimidine cyclase subfamily. In terms of assembly, homodimer. The cofactor is Mn(2+).

The protein resides in the cytoplasm. The catalysed reaction is UTP = 3',5'-cyclic UMP + diphosphate. Functionally, pycsar (pyrimidine cyclase system for antiphage resistance) provides immunity against bacteriophage. The pyrimidine cyclase (PycC) synthesizes cyclic nucleotides in response to infection; these serve as specific second messenger signals. The signals activate the adjacent effector, leading to bacterial cell death and abortive phage infection. A clade C Pycsar system. Its function is as follows. The pyrimidine cyclase gene of a two-gene Pycsar system, weakly generates cyclic UMP (cUMP) from UTP, has little to no activity on ATP, CTP or GTP. Expression of this and adjacent effector GmPycTM (AC P0DV43) probably confers resistance to bacteriophage. The genes are probably only expressed in response to bacteriophage infection. The chain is Uridylate cyclase from Gulbenkiania mobilis.